Here is a 117-residue protein sequence, read N- to C-terminus: uncharacterized protein (117 aa).

Residues 76 to 96 (FIMSSGCFLIASLSCVGLTVF) form a helical membrane-spanning segment.

Its subcellular location is the membrane. This is an uncharacterized protein from Saccharomyces cerevisiae (strain ATCC 204508 / S288c) (Baker's yeast).